We begin with the raw amino-acid sequence, 387 residues long: 4-hydroxy-3-methylbut-2-en-1-yl diphosphate synthase (flavodoxin) (387 aa).

Residues Cys-280, Cys-283, Cys-315, and Glu-322 each contribute to the [4Fe-4S] cluster site.

The protein belongs to the IspG family. Requires [4Fe-4S] cluster as cofactor.

The enzyme catalyses (2E)-4-hydroxy-3-methylbut-2-enyl diphosphate + oxidized [flavodoxin] + H2O + 2 H(+) = 2-C-methyl-D-erythritol 2,4-cyclic diphosphate + reduced [flavodoxin]. The protein operates within isoprenoid biosynthesis; isopentenyl diphosphate biosynthesis via DXP pathway; isopentenyl diphosphate from 1-deoxy-D-xylulose 5-phosphate: step 5/6. In terms of biological role, converts 2C-methyl-D-erythritol 2,4-cyclodiphosphate (ME-2,4cPP) into 1-hydroxy-2-methyl-2-(E)-butenyl 4-diphosphate. The chain is 4-hydroxy-3-methylbut-2-en-1-yl diphosphate synthase (flavodoxin) from Mycobacterium bovis (strain ATCC BAA-935 / AF2122/97).